The chain runs to 434 residues: Oxysterol-binding protein homolog 4 (434 aa).

Positions 7 to 29 (SSSWTSFLKSIASFNGDLSSLSA) are ALPS motif. An OSBP-related domain (ORD) region spans residues 16-366 (SIASFNGDLS…WQRRWFKDFD (351 aa)). 24–29 (LSSLSA) contributes to the a 1,2-diacyl-sn-glycero-3-phospho-(1D-myo-inositol 4-phosphate) binding site. Glutamine 96 contacts 20-hydroxycholesterol. Glutamine 96 serves as a coordination point for 25-hydroxycholesterol. Glutamine 96 and arginine 100 together coordinate 7beta-hydroxycholesterol. Glutamine 96 contacts cholesterol. Glutamine 96 lines the ergosterol pocket. A 1,2-diacyl-sn-glycero-3-phospho-(1D-myo-inositol 4-phosphate)-binding positions include 109-112 (KPLN), 143-144 (HH), lysine 336, glutamate 340, and arginine 344. Residue threonine 370 is modified to Phosphothreonine. Serine 389 is subject to Phosphoserine.

The protein belongs to the OSBP family.

It localises to the cytoplasm. The protein resides in the golgi apparatus membrane. In terms of biological role, lipid transport protein (LTP) involved in non-vesicular transfer of lipids between membranes. Functions in phosphoinositide-coupled directional transport of various lipids by carrying the lipid molecule in a hydrophobic pocket and transferring it between membranes through the cytosol. Involved in maintenance of intracellular sterol distribution and homeostasis. Involved in lipid countertransport between the Golgi complex and membranes of the endoplasmic reticulum. Specifically exchanges sterol with phosphatidylinositol 4-phosphate (PI4P), delivering sterol to the Golgi in exchange for PI4P, which is delivered to the ER-localized PI4P phosphatase SAC1 for degradation. Thus, by maintaining a PI4P gradient at the ER/Golgi interface, SAC1 may drive PS transport. Displays a similar affinity for PI4P and sterols. Binds sterol and PI4P in a mutually exclusive manner. Involved in ergosterol transport from the plasma membrane (PM) to the ER. Mediates sterol transport from the ER to mitochondria. Involved in the negative regulation of Golgi-derived transport vesicle biogenesis. Plays a role in the positive regulation of vesicular transport of ceramide from the ER to the Golgi, negatively regulating COPII-mediated ER export of cargos. The sequence is that of Oxysterol-binding protein homolog 4 from Saccharomyces cerevisiae (strain ATCC 204508 / S288c) (Baker's yeast).